A 332-amino-acid chain; its full sequence is MAKVYHDTEVSLEALKDKIVTIIGYGSQGRAHALNLRDSGIKVIVAVRPNGESWKRALEEGMTVEKIEDAVQKSDVLMFLIPDTEQPTIYKEKVLPYLRPNQALGFAHGFNIHFSQIVPPPFLDVFMVAPKGPGPLVRDLYVEGKGVPALFAVYQDYTQKCRDIALAYAKGIGATRAGVLETTFKEETETDLFGEQVVLCGGVTALIKAGFETLVEAGYQPEVAYYECLHEMKLIVDLINQGGISFMRKAISDTAKYGDITRGPRIVNEETKKEMRKILNEIQSGQFAKEWILENQVGRPVFNALLKKDEDHLIEKVGKVLREMMPWLKPKK.

The KARI N-terminal Rossmann domain maps to A2–T182. NADP(+) is bound by residues Y25–Q28, R48, S53, and D83–Q86. H108 is an active-site residue. G134 contacts NADP(+). The KARI C-terminal knotted domain occupies T183–L328. Residues D191, E195, E227, and E231 each contribute to the Mg(2+) site. A substrate-binding site is contributed by S252.

Belongs to the ketol-acid reductoisomerase family. Mg(2+) is required as a cofactor.

It carries out the reaction (2R)-2,3-dihydroxy-3-methylbutanoate + NADP(+) = (2S)-2-acetolactate + NADPH + H(+). The enzyme catalyses (2R,3R)-2,3-dihydroxy-3-methylpentanoate + NADP(+) = (S)-2-ethyl-2-hydroxy-3-oxobutanoate + NADPH + H(+). It functions in the pathway amino-acid biosynthesis; L-isoleucine biosynthesis; L-isoleucine from 2-oxobutanoate: step 2/4. The protein operates within amino-acid biosynthesis; L-valine biosynthesis; L-valine from pyruvate: step 2/4. Involved in the biosynthesis of branched-chain amino acids (BCAA). Catalyzes an alkyl-migration followed by a ketol-acid reduction of (S)-2-acetolactate (S2AL) to yield (R)-2,3-dihydroxy-isovalerate. In the isomerase reaction, S2AL is rearranged via a Mg-dependent methyl migration to produce 3-hydroxy-3-methyl-2-ketobutyrate (HMKB). In the reductase reaction, this 2-ketoacid undergoes a metal-dependent reduction by NADPH to yield (R)-2,3-dihydroxy-isovalerate. The polypeptide is Ketol-acid reductoisomerase (NADP(+)) (Dictyoglomus turgidum (strain DSM 6724 / Z-1310)).